The following is an 818-amino-acid chain: MSGWRKIYYKLLNLILKLLVKSKVIPTDPVAELRLDTTRPVFYVLPYNSKVDLLTLRDRCLALDLPDPLDDNEIDGVILPRYVFIDDGPRVFRYYAPKQASVKLFLDYLDLHRGNPSLDIQMIPVSVMFGRAPGREDHKGAPQLRLLNGIQKFFAVLWLGRDSFVRFSNTVSLRYMADEHGTDKTIAQKLARVARMHFSRLRLAAVGPRLPDRQALFNKLLGSKAIEKAVEDEARSKKISREKAQQNAVALMEEIAADFTYEAVRLSDRVLSWTWNRLYQGINVHNAERVRQLAQDGHEIVYVPCHRSHMDYLLLSYVLYHQGLVPPHIAAGINLNFWPAGPIFRRLGAFFIRRTFKGNKLYSTVFREYLGELFSRGYSVEYFMEGGRSRTGRLLEPKTGTLAMTLQAMLRGGKRPITLVPVYIGYEHVMEVATYAKELRGATKEKESLPQMVRGLRKLRNLGQGYVNFGEPISLNVWLNQHVPEWREAIDPIEAQRPHWLPASVNSIAGEVMVNINKAAAANAMNLCATALLASRQRALTREQLLEQLECYLQLLQNVPYAPDATLPQRTPQELLDHALQMNKFEVEKDNIGDLIILPREQAVLMTYYRNNIQHMLVLPALVASMVIHHRQISRDELLRQAAVIYPMLKQELFMHYVPETLPQVLSPIIDELCRQQLISLQDDTLIINPPRIRSLQLLAAGVRETLQRYAITFSLLSANPSISRGALEKESRILAQRLSLLHGINAPEFFDKAVFATLVATLRAEGYINDVGDAVREQTLEIYNLLADLLTPEIRLTIESVSIAALEDTGGADGGTA.

The HXXXXD motif signature appears at 305–310 (CHRSHM).

It belongs to the GPAT/DAPAT family.

Its subcellular location is the cell inner membrane. The catalysed reaction is sn-glycerol 3-phosphate + an acyl-CoA = a 1-acyl-sn-glycero-3-phosphate + CoA. Its pathway is phospholipid metabolism; CDP-diacylglycerol biosynthesis; CDP-diacylglycerol from sn-glycerol 3-phosphate: step 1/3. This is Glycerol-3-phosphate acyltransferase from Edwardsiella ictaluri (strain 93-146).